Here is a 117-residue protein sequence, read N- to C-terminus: Small ribosomal subunit protein uS8c (117 aa).

This sequence belongs to the universal ribosomal protein uS8 family. Part of the 30S ribosomal subunit.

The protein resides in the plastid. It is found in the chloroplast. Functionally, one of the primary rRNA binding proteins, it binds directly to 16S rRNA central domain where it helps coordinate assembly of the platform of the 30S subunit. This chain is Small ribosomal subunit protein uS8c (rps8), found in Cyanidioschyzon merolae (strain NIES-3377 / 10D) (Unicellular red alga).